The following is a 360-amino-acid chain: UDP-3-O-acylglucosamine N-acyltransferase (360 aa).

H248 acts as the Proton acceptor in catalysis.

This sequence belongs to the transferase hexapeptide repeat family. LpxD subfamily. In terms of assembly, homotrimer.

It carries out the reaction a UDP-3-O-[(3R)-3-hydroxyacyl]-alpha-D-glucosamine + a (3R)-hydroxyacyl-[ACP] = a UDP-2-N,3-O-bis[(3R)-3-hydroxyacyl]-alpha-D-glucosamine + holo-[ACP] + H(+). It functions in the pathway bacterial outer membrane biogenesis; LPS lipid A biosynthesis. Its function is as follows. Catalyzes the N-acylation of UDP-3-O-acylglucosamine using 3-hydroxyacyl-ACP as the acyl donor. Is involved in the biosynthesis of lipid A, a phosphorylated glycolipid that anchors the lipopolysaccharide to the outer membrane of the cell. The protein is UDP-3-O-acylglucosamine N-acyltransferase of Chlamydia pneumoniae (Chlamydophila pneumoniae).